The sequence spans 335 residues: Mitochondrial fission regulator 1 (335 aa).

The transit peptide at 1 to 48 directs the protein to the mitochondrion; that stretch reads MIRWFKCFMRMIFEQVGLNMESVLWSSKPYGSSRSIVRKIGTNLSLIQ. Positions 134 to 170 form a coiled coil; that stretch reads RSTVIANEEAMQKISALENELATLRAQIAKIVILQEQ. Residues 182-309 are necessary and sufficient to promote mitochondrial fission; it reads ASAAVPCVPP…DKVIPKSETN (128 aa). The segment at 219–240 is disordered; sequence RKNRKTNSGPIPTENGPKKPEI.

This sequence belongs to the MTFR1 family. As to expression, widely expressed in embryonic tissues with higher expression in cartilage and hypertrophic chondrocytes. Specifically expressed in hypertrophic chondrocytes (at protein level).

The protein localises to the mitochondrion. Functionally, may play a role in mitochondrial aerobic respiration. May also regulate mitochondrial organization and fission. The chain is Mitochondrial fission regulator 1 (MTFR1) from Gallus gallus (Chicken).